We begin with the raw amino-acid sequence, 427 residues long: Enolase (427 aa).

Position 163 (Q163) interacts with (2R)-2-phosphoglycerate. Catalysis depends on E205, which acts as the Proton donor. Mg(2+) contacts are provided by D242, E285, and D312. 4 residues coordinate (2R)-2-phosphoglycerate: K337, R366, S367, and K388. K337 functions as the Proton acceptor in the catalytic mechanism.

The protein belongs to the enolase family. Mg(2+) is required as a cofactor.

It localises to the cytoplasm. The protein resides in the secreted. It is found in the cell surface. It catalyses the reaction (2R)-2-phosphoglycerate = phosphoenolpyruvate + H2O. It functions in the pathway carbohydrate degradation; glycolysis; pyruvate from D-glyceraldehyde 3-phosphate: step 4/5. Functionally, catalyzes the reversible conversion of 2-phosphoglycerate (2-PG) into phosphoenolpyruvate (PEP). It is essential for the degradation of carbohydrates via glycolysis. This is Enolase from Herminiimonas arsenicoxydans.